Reading from the N-terminus, the 366-residue chain is Galactoside alpha-(1,2)-fucosyltransferase 1 (366 aa).

Residues 1-8 (MWPLSHRH) are Cytoplasmic-facing. A helical; Signal-anchor for type II membrane protein membrane pass occupies residues 9-25 (LCLAFLLVCVLSAISFF). The Lumenal portion of the chain corresponds to 26 to 366 (LHIHQDSFRH…LSPLWTLAEP (341 aa)). N-linked (GlcNAc...) asparagine glycans are attached at residues N66, N302, and N328.

This sequence belongs to the glycosyltransferase 11 family.

It localises to the golgi apparatus. It is found in the golgi stack membrane. The enzyme catalyses a beta-D-galactosyl-(1-&gt;4)-N-acetyl-beta-D-glucosaminyl derivative + GDP-beta-L-fucose = an alpha-L-Fuc-(1-&gt;2)-beta-D-Gal-(1-&gt;4)-beta-D-GlcNAc derivative + GDP + H(+). It carries out the reaction a ganglioside GA1 + GDP-beta-L-fucose = a ganglioside Fuc-GA1 + GDP + H(+). It catalyses the reaction a beta-D-Gal-(1-&gt;3)-beta-D-GlcNAc-(1-&gt;3)-beta-D-Gal-(1-&gt;4)-beta-D-Glc-(1&lt;-&gt;1')-Cer(d18:1(4E)) + GDP-beta-L-fucose = alpha-L-fucosyl-(1-&gt;2)- beta-D-galactosyl-(1-&gt;3)-N-acetyl-beta-D-glucosaminyl-(1-&gt;3)-beta-D-galactosyl-(1-&gt;4)-beta-D-glucosyl-(1&lt;-&gt;1')-N-acylsphing-4-enine + GDP + H(+). The catalysed reaction is a neolactoside nLc4Cer(d18:1(4E)) + GDP-beta-L-fucose = a neolactoside IV(2)-alpha-Fuc-nLc4Cer(d18:1(4E)) + GDP + H(+). The enzyme catalyses a ganglioside GM1 + GDP-beta-L-fucose = a ganglioside Fuc-GM1 + GDP + H(+). It carries out the reaction beta-D-galactosyl-(1-&gt;3)-N-acetyl-D-galactosamine + GDP-beta-L-fucose = alpha-L-fucosyl-(1-&gt;2)-beta-D-galactosyl-(1-&gt;3)-N-acetyl-D-galactosamine + GDP + H(+). Its pathway is protein modification; protein glycosylation. In terms of biological role, catalyzes the transfer of L-fucose, from a guanosine diphosphate-beta-L-fucose, to the terminal galactose residue of glycoconjugates through an alpha(1,2) linkage leading to H antigen synthesis that is an intermediate substrate in the synthesis of ABO blood group antigens. H antigen is essential for maturation of the glomerular layer of the main olfactory bulb, in cell migration and early cell-cell contacts during tumor associated angiogenesis. Preferentially fucosylates soluble lactose and to a lesser extent fucosylates glycolipids gangliosides GA1 and GM1a. The polypeptide is Galactoside alpha-(1,2)-fucosyltransferase 1 (Ateles belzebuth (White-bellied spider monkey)).